A 525-amino-acid chain; its full sequence is Ankyrin repeat and SOCS box protein 3 (525 aa).

11 ANK repeats span residues 9 to 38, 42 to 71, 78 to 107, 111 to 140, 145 to 174, 178 to 207, 211 to 240, 246 to 275, 279 to 308, 315 to 346, and 348 to 373; these read DTCSTVGLAAREGNVKVLRKLLKKGRSIDV, RGWMPIHEASYHNSVECLRMLIRADSSENY, EGFCALHLAASQGHWKIIQILLEAGADPNA, EETTPLFLAVENGQIDVLRLLLRYGANVNG, CGWNALHQASFQGNAEIIKLLLKKGANKEC, FGITPLFVAAQYGKLESLSILISSGADVNC, DKATPLFIAAQEGHTECVELLLSSGADPDL, NWQLPIHAAAQMGHTKILDLLIPLTNRVCD, NKVSPVYSAVLGGHEECLEMLLQSGYSPDA, GFSSPLCMAFQKDCDFFGIVNILLKYGAQLNE, and HLAYCLKYERFSVFRYFLKKCCPSTP. The SOCS box domain occupies 441–505; it reads MLSARASNSS…HDYLLYAEVL (65 aa).

It belongs to the ankyrin SOCS box (ASB) family. In terms of assembly, interacts with ELOB and TNFRSF1B.

It functions in the pathway protein modification; protein ubiquitination. In terms of biological role, probable substrate-recognition component of a SCF-like ECS (Elongin-Cullin-SOCS-box protein) E3 ubiquitin-protein ligase complex which mediates the ubiquitination and subsequent proteasomal degradation of target proteins. Recognizes TNFRSF1B. The sequence is that of Ankyrin repeat and SOCS box protein 3 (ASB3) from Bos taurus (Bovine).